The primary structure comprises 227 residues: Cytochrome c oxidase subunit 2 (227 aa).

Over 1–14 (MAYPFQLGLQDATS) the chain is Mitochondrial intermembrane. Residues 15-45 (PIMEELLHFHDHTLMIVFLISSLVLYIISLM) form a helical membrane-spanning segment. Over 46–59 (LTTKLTHTSTMDAQ) the chain is Mitochondrial matrix. A helical membrane pass occupies residues 60–87 (EVETVWTILPAIILILIALPSLRILYMM). Topologically, residues 88 to 227 (DEINNPSLTV…YFEAWSALMV (140 aa)) are mitochondrial intermembrane. Cu cation is bound by residues His-161, Cys-196, Glu-198, Cys-200, His-204, and Met-207. Glu-198 contributes to the Mg(2+) binding site. Phosphotyrosine is present on Tyr-218.

It belongs to the cytochrome c oxidase subunit 2 family. In terms of assembly, component of the cytochrome c oxidase (complex IV, CIV), a multisubunit enzyme composed of 14 subunits. The complex is composed of a catalytic core of 3 subunits MT-CO1, MT-CO2 and MT-CO3, encoded in the mitochondrial DNA, and 11 supernumerary subunits COX4I, COX5A, COX5B, COX6A, COX6B, COX6C, COX7A, COX7B, COX7C, COX8 and NDUFA4, which are encoded in the nuclear genome. The complex exists as a monomer or a dimer and forms supercomplexes (SCs) in the inner mitochondrial membrane with NADH-ubiquinone oxidoreductase (complex I, CI) and ubiquinol-cytochrome c oxidoreductase (cytochrome b-c1 complex, complex III, CIII), resulting in different assemblies (supercomplex SCI(1)III(2)IV(1) and megacomplex MCI(2)III(2)IV(2)). Found in a complex with TMEM177, COA6, COX18, COX20, SCO1 and SCO2. Interacts with TMEM177 in a COX20-dependent manner. Interacts with COX20. Interacts with COX16. It depends on Cu cation as a cofactor.

The protein resides in the mitochondrion inner membrane. It catalyses the reaction 4 Fe(II)-[cytochrome c] + O2 + 8 H(+)(in) = 4 Fe(III)-[cytochrome c] + 2 H2O + 4 H(+)(out). In terms of biological role, component of the cytochrome c oxidase, the last enzyme in the mitochondrial electron transport chain which drives oxidative phosphorylation. The respiratory chain contains 3 multisubunit complexes succinate dehydrogenase (complex II, CII), ubiquinol-cytochrome c oxidoreductase (cytochrome b-c1 complex, complex III, CIII) and cytochrome c oxidase (complex IV, CIV), that cooperate to transfer electrons derived from NADH and succinate to molecular oxygen, creating an electrochemical gradient over the inner membrane that drives transmembrane transport and the ATP synthase. Cytochrome c oxidase is the component of the respiratory chain that catalyzes the reduction of oxygen to water. Electrons originating from reduced cytochrome c in the intermembrane space (IMS) are transferred via the dinuclear copper A center (CU(A)) of subunit 2 and heme A of subunit 1 to the active site in subunit 1, a binuclear center (BNC) formed by heme A3 and copper B (CU(B)). The BNC reduces molecular oxygen to 2 water molecules using 4 electrons from cytochrome c in the IMS and 4 protons from the mitochondrial matrix. The sequence is that of Cytochrome c oxidase subunit 2 (MT-CO2) from Cuon alpinus (Dhole).